We begin with the raw amino-acid sequence, 538 residues long: Bifunctional purine biosynthesis protein PurH (538 aa).

An MGS-like domain is found at 8 to 158 (IPAPDKVQVK…KNHAYVTTLT (151 aa)).

The protein belongs to the PurH family.

The enzyme catalyses (6R)-10-formyltetrahydrofolate + 5-amino-1-(5-phospho-beta-D-ribosyl)imidazole-4-carboxamide = 5-formamido-1-(5-phospho-D-ribosyl)imidazole-4-carboxamide + (6S)-5,6,7,8-tetrahydrofolate. It carries out the reaction IMP + H2O = 5-formamido-1-(5-phospho-D-ribosyl)imidazole-4-carboxamide. It participates in purine metabolism; IMP biosynthesis via de novo pathway; 5-formamido-1-(5-phospho-D-ribosyl)imidazole-4-carboxamide from 5-amino-1-(5-phospho-D-ribosyl)imidazole-4-carboxamide (10-formyl THF route): step 1/1. Its pathway is purine metabolism; IMP biosynthesis via de novo pathway; IMP from 5-formamido-1-(5-phospho-D-ribosyl)imidazole-4-carboxamide: step 1/1. The protein is Bifunctional purine biosynthesis protein PurH of Rhizobium rhizogenes (strain K84 / ATCC BAA-868) (Agrobacterium radiobacter).